A 428-amino-acid chain; its full sequence is tRNA modification GTPase MnmE (428 aa).

Positions 20, 76, and 116 each coordinate (6S)-5-formyl-5,6,7,8-tetrahydrofolate. In terms of domain architecture, TrmE-type G spans 212-351; the sequence is GFEVAIVGAP…LVAAIGERLL (140 aa). N222 contacts K(+). Residues 222–227, 241–247, and 266–269 contribute to the GTP site; these read NAGKST, SEIAGTT, and DTAG. S226 is a binding site for Mg(2+). K(+)-binding residues include S241, I243, and T246. Residue T247 participates in Mg(2+) binding. Residue K428 coordinates (6S)-5-formyl-5,6,7,8-tetrahydrofolate.

It belongs to the TRAFAC class TrmE-Era-EngA-EngB-Septin-like GTPase superfamily. TrmE GTPase family. In terms of assembly, homodimer. Heterotetramer of two MnmE and two MnmG subunits. It depends on K(+) as a cofactor.

Its subcellular location is the cytoplasm. Its function is as follows. Exhibits a very high intrinsic GTPase hydrolysis rate. Involved in the addition of a carboxymethylaminomethyl (cmnm) group at the wobble position (U34) of certain tRNAs, forming tRNA-cmnm(5)s(2)U34. This chain is tRNA modification GTPase MnmE, found in Cereibacter sphaeroides (strain ATCC 17029 / ATH 2.4.9) (Rhodobacter sphaeroides).